Consider the following 478-residue polypeptide: Glutamyl-tRNA(Gln) amidotransferase subunit A 2 (478 aa).

Active-site charge relay system residues include lysine 79 and serine 154. Catalysis depends on serine 178, which acts as the Acyl-ester intermediate.

This sequence belongs to the amidase family. GatA subfamily. In terms of assembly, heterotrimer of A, B and C subunits.

It carries out the reaction L-glutamyl-tRNA(Gln) + L-glutamine + ATP + H2O = L-glutaminyl-tRNA(Gln) + L-glutamate + ADP + phosphate + H(+). Functionally, allows the formation of correctly charged Gln-tRNA(Gln) through the transamidation of misacylated Glu-tRNA(Gln) in organisms which lack glutaminyl-tRNA synthetase. The reaction takes place in the presence of glutamine and ATP through an activated gamma-phospho-Glu-tRNA(Gln). This Clostridium acetobutylicum (strain ATCC 824 / DSM 792 / JCM 1419 / IAM 19013 / LMG 5710 / NBRC 13948 / NRRL B-527 / VKM B-1787 / 2291 / W) protein is Glutamyl-tRNA(Gln) amidotransferase subunit A 2 (gatA2).